The chain runs to 201 residues: NADH-quinone oxidoreductase subunit C (201 aa).

Belongs to the complex I 30 kDa subunit family. In terms of assembly, NDH-1 is composed of 14 different subunits. Subunits NuoB, C, D, E, F, and G constitute the peripheral sector of the complex.

The protein localises to the cell inner membrane. The catalysed reaction is a quinone + NADH + 5 H(+)(in) = a quinol + NAD(+) + 4 H(+)(out). Its function is as follows. NDH-1 shuttles electrons from NADH, via FMN and iron-sulfur (Fe-S) centers, to quinones in the respiratory chain. The immediate electron acceptor for the enzyme in this species is believed to be ubiquinone. Couples the redox reaction to proton translocation (for every two electrons transferred, four hydrogen ions are translocated across the cytoplasmic membrane), and thus conserves the redox energy in a proton gradient. The protein is NADH-quinone oxidoreductase subunit C of Ruegeria sp. (strain TM1040) (Silicibacter sp.).